The following is a 637-amino-acid chain: Threonine--tRNA ligase (637 aa).

In terms of domain architecture, TGS spans Met-1–Thr-61. Residues Asp-244 to Pro-535 form a catalytic region. Zn(2+) is bound by residues Cys-335, His-386, and His-512.

This sequence belongs to the class-II aminoacyl-tRNA synthetase family. In terms of assembly, homodimer. Zn(2+) is required as a cofactor.

It localises to the cytoplasm. It carries out the reaction tRNA(Thr) + L-threonine + ATP = L-threonyl-tRNA(Thr) + AMP + diphosphate + H(+). Its function is as follows. Catalyzes the attachment of threonine to tRNA(Thr) in a two-step reaction: L-threonine is first activated by ATP to form Thr-AMP and then transferred to the acceptor end of tRNA(Thr). Also edits incorrectly charged L-seryl-tRNA(Thr). This chain is Threonine--tRNA ligase, found in Thiobacillus denitrificans (strain ATCC 25259 / T1).